Here is a 252-residue protein sequence, read N- to C-terminus: Thiazole synthase (252 aa).

Residue Lys98 is the Schiff-base intermediate with DXP of the active site. Residues Gly159, 185-186, and 207-208 contribute to the 1-deoxy-D-xylulose 5-phosphate site; these read AG and AT.

This sequence belongs to the ThiG family. Homotetramer. Forms heterodimers with either ThiH or ThiS.

Its subcellular location is the cytoplasm. The enzyme catalyses [ThiS sulfur-carrier protein]-C-terminal-Gly-aminoethanethioate + 2-iminoacetate + 1-deoxy-D-xylulose 5-phosphate = [ThiS sulfur-carrier protein]-C-terminal Gly-Gly + 2-[(2R,5Z)-2-carboxy-4-methylthiazol-5(2H)-ylidene]ethyl phosphate + 2 H2O + H(+). It functions in the pathway cofactor biosynthesis; thiamine diphosphate biosynthesis. In terms of biological role, catalyzes the rearrangement of 1-deoxy-D-xylulose 5-phosphate (DXP) to produce the thiazole phosphate moiety of thiamine. Sulfur is provided by the thiocarboxylate moiety of the carrier protein ThiS. In vitro, sulfur can be provided by H(2)S. The sequence is that of Thiazole synthase from Mycolicibacterium smegmatis (strain ATCC 700084 / mc(2)155) (Mycobacterium smegmatis).